We begin with the raw amino-acid sequence, 557 residues long: Selenoprotein N (557 aa).

The tract at residues 1–24 (MGQARPAARRPHSPDPGAQPAPPR) is disordered. An N-terminal signal peptide occupies residues 1–42 (MGQARPAARRPHSPDPGAQPAPPRRRARALALLGALLAAAAA). Residues 67 to 102 (VLGTDGLFLFSSLDTDQDMYISPEEFKPIAEKLTGS) form the EF-hand domain. Asn156 carries N-linked (GlcNAc...) asparagine glycosylation. A non-standard amino acid (selenocysteine) is located at residue Sec428. Asn449 and Asn497 each carry an N-linked (GlcNAc...) asparagine glycan.

In terms of assembly, interacts with RYR1, RYR2 and RYR3. In terms of processing, N-glycosylated.

It is found in the endoplasmic reticulum membrane. Plays an important role in cell protection against oxidative stress and in the regulation of redox-related calcium homeostasis. Regulates the calcium level of the ER by protecting the calcium pump ATP2A2 against the oxidoreductase ERO1A-mediated oxidative damage. Within the ER, ERO1A activity increases the concentration of H(2)O(2), which attacks the luminal thiols in ATP2A2 and thus leads to cysteinyl sulfenic acid formation (-SOH) and SEPN1 reduces the SOH back to free thiol (-SH), thus restoring ATP2A2 activity. Acts as a modulator of ryanodine receptor (RyR) activity: protects RyR from oxidation due to increased oxidative stress, or directly controls the RyR redox state, regulating the RyR-mediated calcium mobilization required for normal muscle development and differentiation. Essential for muscle regeneration and satellite cell maintenance in skeletal muscle. This is Selenoprotein N from Mus musculus (Mouse).